Here is a 236-residue protein sequence, read N- to C-terminus: Leucyl/phenylalanyl-tRNA--protein transferase (236 aa).

The protein belongs to the L/F-transferase family.

It is found in the cytoplasm. The enzyme catalyses N-terminal L-lysyl-[protein] + L-leucyl-tRNA(Leu) = N-terminal L-leucyl-L-lysyl-[protein] + tRNA(Leu) + H(+). The catalysed reaction is N-terminal L-arginyl-[protein] + L-leucyl-tRNA(Leu) = N-terminal L-leucyl-L-arginyl-[protein] + tRNA(Leu) + H(+). It carries out the reaction L-phenylalanyl-tRNA(Phe) + an N-terminal L-alpha-aminoacyl-[protein] = an N-terminal L-phenylalanyl-L-alpha-aminoacyl-[protein] + tRNA(Phe). Functions in the N-end rule pathway of protein degradation where it conjugates Leu, Phe and, less efficiently, Met from aminoacyl-tRNAs to the N-termini of proteins containing an N-terminal arginine or lysine. In Shewanella sp. (strain MR-7), this protein is Leucyl/phenylalanyl-tRNA--protein transferase.